The following is a 113-amino-acid chain: Small ribosomal subunit protein uS17 (113 aa).

This sequence belongs to the universal ribosomal protein uS17 family. Part of the 30S ribosomal subunit.

Functionally, one of the primary rRNA binding proteins, it binds specifically to the 5'-end of 16S ribosomal RNA. The chain is Small ribosomal subunit protein uS17 from Pyrococcus furiosus (strain ATCC 43587 / DSM 3638 / JCM 8422 / Vc1).